A 136-amino-acid polypeptide reads, in one-letter code: Large-conductance mechanosensitive channel (136 aa).

The next 2 membrane-spanning stretches (helical) occupy residues 10–30 (FAMR…AAFG) and 76–96 (GAFI…FIAI).

The protein belongs to the MscL family. In terms of assembly, homopentamer.

The protein resides in the cell inner membrane. Channel that opens in response to stretch forces in the membrane lipid bilayer. May participate in the regulation of osmotic pressure changes within the cell. The protein is Large-conductance mechanosensitive channel of Pectobacterium atrosepticum (strain SCRI 1043 / ATCC BAA-672) (Erwinia carotovora subsp. atroseptica).